A 416-amino-acid polypeptide reads, in one-letter code: Gamma-glutamyl phosphate reductase (416 aa).

It belongs to the gamma-glutamyl phosphate reductase family.

It localises to the cytoplasm. The enzyme catalyses L-glutamate 5-semialdehyde + phosphate + NADP(+) = L-glutamyl 5-phosphate + NADPH + H(+). The protein operates within amino-acid biosynthesis; L-proline biosynthesis; L-glutamate 5-semialdehyde from L-glutamate: step 2/2. Its function is as follows. Catalyzes the NADPH-dependent reduction of L-glutamate 5-phosphate into L-glutamate 5-semialdehyde and phosphate. The product spontaneously undergoes cyclization to form 1-pyrroline-5-carboxylate. This chain is Gamma-glutamyl phosphate reductase, found in Streptococcus pyogenes serotype M3 (strain ATCC BAA-595 / MGAS315).